Reading from the N-terminus, the 414-residue chain is Multifunctional CCA protein (414 aa).

G8 and R11 together coordinate ATP. G8 and R11 together coordinate CTP. Mg(2+) is bound by residues E21 and D23. R91, R137, and R140 together coordinate ATP. Residues R91, R137, and R140 each contribute to the CTP site. The region spanning T228–W329 is the HD domain.

Belongs to the tRNA nucleotidyltransferase/poly(A) polymerase family. Bacterial CCA-adding enzyme type 1 subfamily. Monomer. Can also form homodimers and oligomers. Mg(2+) serves as cofactor. The cofactor is Ni(2+).

The enzyme catalyses a tRNA precursor + 2 CTP + ATP = a tRNA with a 3' CCA end + 3 diphosphate. It carries out the reaction a tRNA with a 3' CCA end + 2 CTP + ATP = a tRNA with a 3' CCACCA end + 3 diphosphate. In terms of biological role, catalyzes the addition and repair of the essential 3'-terminal CCA sequence in tRNAs without using a nucleic acid template. Adds these three nucleotides in the order of C, C, and A to the tRNA nucleotide-73, using CTP and ATP as substrates and producing inorganic pyrophosphate. tRNA 3'-terminal CCA addition is required both for tRNA processing and repair. Also involved in tRNA surveillance by mediating tandem CCA addition to generate a CCACCA at the 3' terminus of unstable tRNAs. While stable tRNAs receive only 3'-terminal CCA, unstable tRNAs are marked with CCACCA and rapidly degraded. This chain is Multifunctional CCA protein, found in Pectobacterium carotovorum subsp. carotovorum (strain PC1).